A 582-amino-acid polypeptide reads, in one-letter code: Hemagglutinin-neuraminidase (582 aa).

The Intravirion portion of the chain corresponds to 1–34 (MEPSKLFIMSDNATVAPGPVVNAAGKKTFRTCFR). The helical; Signal-anchor for type II membrane protein transmembrane segment at 35–55 (ILVLSVQAVTLILVIVTLGEL) threads the bilayer. Topologically, residues 56–582 (IRMINDQGLS…LPVLARLTIT (527 aa)) are virion surface. 3 cysteine pairs are disulfide-bonded: Cys-178–Cys-202, Cys-192–Cys-253, and Cys-244–Cys-257. Residues 240 to 245 (NRKSCS) are involved in neuraminidase activity. Asn-284 and Asn-329 each carry an N-linked (GlcNAc...) asparagine; by host glycan. Intrachain disulfides connect Cys-350–Cys-471, Cys-382–Cys-392, and Cys-465–Cys-475. N-linked (GlcNAc...) asparagine; by host glycans are attached at residues Asn-400 and Asn-448. Asn-507 carries an N-linked (GlcNAc...) asparagine; by host glycan. The cysteines at positions 545 and 556 are disulfide-linked.

This sequence belongs to the paramyxoviruses hemagglutinin-neuraminidase family. In terms of assembly, homotetramer; composed of disulfide-linked homodimers. Interacts with F protein trimer.

Its subcellular location is the virion membrane. The protein resides in the host cell membrane. It catalyses the reaction Hydrolysis of alpha-(2-&gt;3)-, alpha-(2-&gt;6)-, alpha-(2-&gt;8)- glycosidic linkages of terminal sialic acid residues in oligosaccharides, glycoproteins, glycolipids, colominic acid and synthetic substrates.. Functionally, attaches the virus to alpha-2,3-linked sialic acid-containing cell receptors and thereby initiating infection. Binding of HN protein to the receptor induces a conformational change that allows the F protein to trigger virion/cell membranes fusion. Binds to the glycan motifs sialyl Lewis (SLe) and GM2 ganglioside (GM2-glycan). Its function is as follows. Neuraminidase activity ensures the efficient spread of the virus by dissociating the mature virions from the neuraminic acid containing glycoproteins. In Homo sapiens (Human), this protein is Hemagglutinin-neuraminidase (HN).